The primary structure comprises 169 residues: Endoribonuclease YbeY (169 aa).

Positions 72–95 (GPVAAPRQEPDSPPACRKDSSHAE) are disordered. Zn(2+)-binding residues include His-131, His-135, and His-141.

Belongs to the endoribonuclease YbeY family. Requires Zn(2+) as cofactor.

It is found in the cytoplasm. Its function is as follows. Single strand-specific metallo-endoribonuclease involved in late-stage 70S ribosome quality control and in maturation of the 3' terminus of the 16S rRNA. The polypeptide is Endoribonuclease YbeY (Oleidesulfovibrio alaskensis (strain ATCC BAA-1058 / DSM 17464 / G20) (Desulfovibrio alaskensis)).